A 299-amino-acid chain; its full sequence is ATP phosphoribosyltransferase (299 aa).

The protein belongs to the ATP phosphoribosyltransferase family. Long subfamily. Mg(2+) serves as cofactor.

The protein resides in the cytoplasm. The catalysed reaction is 1-(5-phospho-beta-D-ribosyl)-ATP + diphosphate = 5-phospho-alpha-D-ribose 1-diphosphate + ATP. The protein operates within amino-acid biosynthesis; L-histidine biosynthesis; L-histidine from 5-phospho-alpha-D-ribose 1-diphosphate: step 1/9. Its activity is regulated as follows. Feedback inhibited by histidine. In terms of biological role, catalyzes the condensation of ATP and 5-phosphoribose 1-diphosphate to form N'-(5'-phosphoribosyl)-ATP (PR-ATP). Has a crucial role in the pathway because the rate of histidine biosynthesis seems to be controlled primarily by regulation of HisG enzymatic activity. The polypeptide is ATP phosphoribosyltransferase (Mannheimia succiniciproducens (strain KCTC 0769BP / MBEL55E)).